Here is a 313-residue protein sequence, read N- to C-terminus: Ribosomal RNA small subunit methyltransferase H (313 aa).

S-adenosyl-L-methionine contacts are provided by residues 35 to 37, Asp55, Phe79, Asp101, and Gln108; that span reads GGH.

The protein belongs to the methyltransferase superfamily. RsmH family.

Its subcellular location is the cytoplasm. It catalyses the reaction cytidine(1402) in 16S rRNA + S-adenosyl-L-methionine = N(4)-methylcytidine(1402) in 16S rRNA + S-adenosyl-L-homocysteine + H(+). Functionally, specifically methylates the N4 position of cytidine in position 1402 (C1402) of 16S rRNA. The sequence is that of Ribosomal RNA small subunit methyltransferase H from Salmonella paratyphi A (strain ATCC 9150 / SARB42).